The following is a 369-amino-acid chain: MAHCTEYMNAPKKLPADVAEELATTAQKLVQAGKGILAADESTQTIKKRFDNIKLENTIENRASYRDLLFGTKGLGKFISGAILFEETLFQKNEAGVPMVNLLHNENIIPGIKVDKGLVNIPCTDEEKSTQGLDGLAERCKEYYKAGARFAKWRTVLVIDTAKGKPTDLSIHETAWGLARYASICQQNRLVPIVEPEILADGPHSIEVCAVVTQKVLSCVFKALQENGVLLEGALLKPNMVTAGYECTAKTTTQDVGFLTVRTLRRTVPPALPGVVFLSGGQSEEEASVNLNSINALGPHPWALTFSYGRALQASVLNTWQGKKENVAKAREVLLQRAEANSLATYGKYKGGAGGENAGASLYEKKYVY.

Residue Asp-40 coordinates dihydroxyacetone phosphate. Ser-42 and Thr-45 together coordinate D-glyceraldehyde 3-phosphate. Arg-49 provides a ligand contact to beta-D-fructose 1,6-bisphosphate. Residue Lys-113 coordinates D-glyceraldehyde 3-phosphate. Residue Lys-152 coordinates dihydroxyacetone phosphate. Glu-195 serves as a coordination point for D-glyceraldehyde 3-phosphate. Glu-195 serves as the catalytic Proton acceptor. Dihydroxyacetone phosphate is bound by residues Lys-237, Ser-279, and Gly-280. Lys-237 (schiff-base intermediate with dihydroxyacetone phosphate) is an active-site residue. Residues 279 to 281 (SGG) and Ser-307 each bind beta-D-fructose 1,6-bisphosphate. Residues Gly-309 and Arg-310 each coordinate dihydroxyacetone phosphate. Arg-310 is a binding site for beta-D-fructose 1,6-bisphosphate.

This sequence belongs to the class I fructose-bisphosphate aldolase family. Homotetramer. Interacts with TRAP (via cytoplasmic domain); the interaction prevents substrate binding and thereby inhibits aldolase activity. Interacts with MTRAP (via cytoplasmic domain); MTRAP phosphorylation may increase the binding to FBPA. Interact with RH1 (via cytoplasmic domain). Interacts with RH2b (via cytoplasmic domain). Interacts with RH4 (via cytoplasmic domain). Interacts with AMA1 (via cytoplasmic domain); the interaction is weak, however it may be increased upon AMA1 phosphorylation. Interacts with EBA140 (via cytoplasmic domain); the interaction is weak. Interacts with EBA175 (via cytoplasmic domain); the interaction is weak. Interacts with EBA181 (via cytoplasmic domain); the interaction is weak. Interacts with G-actin and F-actin. May interact with ACT2/actin II; the interaction inhibits FBPA catalytic activity. Interacts with human SLC4A1/band 3 (via N-terminus); the interaction inhibits FBPA catalytic activity.

It localises to the cytoplasm. Its subcellular location is the membrane. It is found in the host cell membrane. It carries out the reaction beta-D-fructose 1,6-bisphosphate = D-glyceraldehyde 3-phosphate + dihydroxyacetone phosphate. It functions in the pathway carbohydrate degradation; glycolysis; D-glyceraldehyde 3-phosphate and glycerone phosphate from D-glucose: step 4/4. The cytoplasmic tail of TRAP and probably other adhesins acts as a competitive inhibitor as the binding sites of the glycolytic substrate fructose 1,6-bisphosphate and TRAP partially overlap. Plays a key role in glycolysis by catalyzing the cleavage of fructose 1,6-bisphosphate into dihydroxyacetone phosphate and glyceraldehyde 3-phosphate. Independently of its catalytic activity, connects the actin filaments, and thus the actomyosin motor, to cell surface adhesins of the thrombospondin-related anonymous protein (TRAP), the erythrocyte binding ligand (EBL) and reticulocyte binding homolog (RH) protein families; this interaction is probably involved in transducing the motor force across the parasite surface required for sporozoite and ookinete gliding motility and merozoite invasion. Stimulates actin polymerisation. In Plasmodium falciparum (isolate 3D7), this protein is Fructose-bisphosphate aldolase.